The sequence spans 624 residues: (-)-beta-phellandrene synthase 1, chloroplastic (624 aa).

Residues 1 to 48 (MAIVSSVPLASKSCLHKSLISSIHKLKPFCRTIPTLGMSRPGKYVMPS) constitute a chloroplast transit peptide. 3 residues coordinate Mg(2+): aspartate 375, aspartate 379, and aspartate 527. The DDXXD motif signature appears at 375-379 (DDMYD).

Belongs to the terpene synthase family. Tpsd subfamily. Requires Mg(2+) as cofactor. Mn(2+) is required as a cofactor.

The protein resides in the plastid. The protein localises to the chloroplast. The enzyme catalyses (2E)-geranyl diphosphate = (-)-beta-phellandrene + diphosphate. It participates in terpene metabolism; oleoresin biosynthesis. Functionally, terpene synthase (TPS) involved in the biosynthesis of monoterpene natural products included in conifer oleoresin secretions and volatile emissions; these compounds contribute to biotic and abiotic stress defense against herbivores and pathogens. Catalyzes the conversion of (2E)-geranyl diphosphate (GPP) to (-)-beta-phellandrene. The polypeptide is (-)-beta-phellandrene synthase 1, chloroplastic (Picea sitchensis (Sitka spruce)).